The primary structure comprises 364 residues: Probable cysteine protease RDL4 (364 aa).

The first 23 residues, Met-1–Ala-23, serve as a signal peptide directing secretion. A propeptide spans Ile-24–Val-136 (activation peptide). Residue Asn-87 is glycosylated (N-linked (GlcNAc...) asparagine). 3 disulfides stabilise this stretch: Cys-158/Cys-199, Cys-192/Cys-232, and Cys-291/Cys-342. Cys-161 is a catalytic residue. Active-site residues include His-297 and Asn-317.

Belongs to the peptidase C1 family. As to expression, expressed in inflorescences.

Functionally, probable thiol protease. In Arabidopsis thaliana (Mouse-ear cress), this protein is Probable cysteine protease RDL4.